The primary structure comprises 287 residues: 2-dehydro-3-deoxyphosphooctonate aldolase (287 aa).

Belongs to the KdsA family.

Its subcellular location is the cytoplasm. It carries out the reaction D-arabinose 5-phosphate + phosphoenolpyruvate + H2O = 3-deoxy-alpha-D-manno-2-octulosonate-8-phosphate + phosphate. It functions in the pathway carbohydrate biosynthesis; 3-deoxy-D-manno-octulosonate biosynthesis; 3-deoxy-D-manno-octulosonate from D-ribulose 5-phosphate: step 2/3. It participates in bacterial outer membrane biogenesis; lipopolysaccharide biosynthesis. This chain is 2-dehydro-3-deoxyphosphooctonate aldolase, found in Caulobacter vibrioides (strain ATCC 19089 / CIP 103742 / CB 15) (Caulobacter crescentus).